Consider the following 385-residue polypeptide: Proteinase-activated receptor 4 (385 aa).

A signal peptide spans 1-17; sequence MWGRLLLWPLVLGFSLS. Positions 18-47 are cleaved as a propeptide — removed for receptor activation; sequence GGTQTPSVYDESGSTGGGDDSTPSILPAPR. The segment at 21–42 is disordered; sequence QTPSVYDESGSTGGGDDSTPSI. Residues 48–82 lie on the Extracellular side of the membrane; that stretch reads GYPGQVCANDSDTLELPDSSRALLLGWVPTRLVPA. The N-linked (GlcNAc...) asparagine glycan is linked to Asn-56. A helical membrane pass occupies residues 83 to 103; sequence LYGLVLVVGLPANGLALWVLA. Residues 104-108 are Cytoplasmic-facing; it reads TQAPR. Residues 109 to 129 traverse the membrane as a helical segment; that stretch reads LPSTMLLMNLAAADLLLALAL. Residues 130 to 151 lie on the Extracellular side of the membrane; the sequence is PPRIAYHLRGQRWPFGEAACRL. A disulfide bridge connects residues Cys-149 and Cys-228. The helical transmembrane segment at 152–172 threads the bilayer; that stretch reads ATAALYGHMYGSVLLLAAVSL. The Cytoplasmic portion of the chain corresponds to 173–192; sequence DRYLALVHPLRARALRGRRL. Residues 193–213 form a helical membrane-spanning segment; sequence ALGLCMAAWLMAAALALPLTL. Residues 214–247 are Extracellular-facing; that stretch reads QRQTFRLARSDRVLCHDALPLDAQASHWQPAFTC. Residues 248 to 268 form a helical membrane-spanning segment; sequence LALLGCFLPLLAMLLCYGATL. Topologically, residues 269-283 are cytoplasmic; the sequence is HTLAASGRRYGHALR. A helical transmembrane segment spans residues 284–304; it reads LTAVVLASAVAFFVPSNLLLL. The Extracellular portion of the chain corresponds to 305–319; sequence LHYSDPSPSAWGNLY. The helical transmembrane segment at 320–343 threads the bilayer; that stretch reads GAYVPSLALSTLNSCVDPFIYYYV. The Cytoplasmic portion of the chain corresponds to 344–385; it reads SAEFRDKVRAGLFQRSPGDTVASKASAEGGSRGMGTHSSLLQ. The tract at residues 362–385 is disordered; sequence DTVASKASAEGGSRGMGTHSSLLQ.

Belongs to the G-protein coupled receptor 1 family. A proteolytic cleavage generates a new N-terminus that functions as a tethered ligand. As to expression, widely expressed, with highest levels in lung, pancreas, thyroid, testis and small intestine. Not expressed in brain, kidney, spinal cord and peripheral blood leukocytes. Also detected in platelets.

Its subcellular location is the cell membrane. Activated upon interaction by mucunain, a cowhage (Mucuna pruriens) plant cysteine proteinase. Functionally, receptor for activated thrombin or trypsin coupled to G proteins that stimulate phosphoinositide hydrolysis. May play a role in platelets activation. The polypeptide is Proteinase-activated receptor 4 (F2RL3) (Homo sapiens (Human)).